Consider the following 225-residue polypeptide: MSDQGRLSLPRGEGGTDEPNPRHLCSYSKLEFHLPLPESMASVFACWGCGEYHVCDGSSECTLIETHEGVVCALTGNYMGPHFQPALRPWTEIRQDTQDQRDKWEPEQVQGLVKTVVNHLYHYFLNENVISGVSEALFDQEGALRPHIPALVSFVFPCCLMLFRGASSEKVVDVVLSLYIHVIISIYSQKTVYGALLFKSTRNKRYDAVAKRMRELWMSTLTTKC.

A disordered region spans residues 1–20; sequence MSDQGRLSLPRGEGGTDEPN.

Belongs to the herpesviridae UL92 family.

Part of the viral pre-initiation complex (vPIC) that is responsible for the expression of vPIC-dependent late genes. vPIC is composed of at least BcRF1 that binds the viral TATT box, BDLF3.5, BDLF4, BFRF2, BGLF3, BGLF4 and BVLF1. In Homo sapiens (Human), this protein is Late gene expression regulator BDLF4.